Here is a 382-residue protein sequence, read N- to C-terminus: Succinyl-diaminopimelate desuccinylase (382 aa).

His-73 lines the Zn(2+) pocket. Asp-75 is an active-site residue. Asp-106 provides a ligand contact to Zn(2+). Residue Glu-140 is the Proton acceptor of the active site. Glu-141, Glu-169, and His-355 together coordinate Zn(2+).

Belongs to the peptidase M20A family. DapE subfamily. Homodimer. Zn(2+) serves as cofactor. Requires Co(2+) as cofactor.

It catalyses the reaction N-succinyl-(2S,6S)-2,6-diaminopimelate + H2O = (2S,6S)-2,6-diaminopimelate + succinate. It functions in the pathway amino-acid biosynthesis; L-lysine biosynthesis via DAP pathway; LL-2,6-diaminopimelate from (S)-tetrahydrodipicolinate (succinylase route): step 3/3. Functionally, catalyzes the hydrolysis of N-succinyl-L,L-diaminopimelic acid (SDAP), forming succinate and LL-2,6-diaminopimelate (DAP), an intermediate involved in the bacterial biosynthesis of lysine and meso-diaminopimelic acid, an essential component of bacterial cell walls. The chain is Succinyl-diaminopimelate desuccinylase from Saccharophagus degradans (strain 2-40 / ATCC 43961 / DSM 17024).